A 358-amino-acid polypeptide reads, in one-letter code: Valine dehydrogenase (358 aa).

The active site involves lysine 88. Glycine 188–histidine 194 lines the NAD(+) pocket.

Belongs to the Glu/Leu/Phe/Val dehydrogenases family. In terms of assembly, homodimer.

The protein localises to the cytoplasm. The catalysed reaction is L-valine + NAD(+) + H2O = 3-methyl-2-oxobutanoate + NH4(+) + NADH + H(+). The protein operates within amino-acid degradation; L-valine degradation. In terms of biological role, oxidative deamination of branched-chain amino acids. The catabolism of valine is the major source of fatty acid precursors for macrolide biosynthesis and a vital source of antibiotic precursors. The polypeptide is Valine dehydrogenase (vdh) (Streptomyces virginiae (Streptomyces cinnamonensis)).